The following is a 316-amino-acid chain: L-lactate dehydrogenase (316 aa).

NAD(+)-binding positions include valine 16, aspartate 37, lysine 42, tyrosine 68, and 82-83; that span reads GA. Positions 85 and 91 each coordinate substrate. Residues serine 104, 121–123, and serine 146 each bind NAD(+); that span reads AAN. 123 to 126 lines the substrate pocket; the sequence is NPVD. 151-154 contributes to the substrate binding site; sequence DSAR. 2 residues coordinate beta-D-fructose 1,6-bisphosphate: arginine 156 and histidine 171. Residue histidine 178 is the Proton acceptor of the active site. Tyrosine 222 carries the post-translational modification Phosphotyrosine. Threonine 231 is a binding site for substrate.

The protein belongs to the LDH/MDH superfamily. LDH family. Homotetramer.

Its subcellular location is the cytoplasm. It carries out the reaction (S)-lactate + NAD(+) = pyruvate + NADH + H(+). It functions in the pathway fermentation; pyruvate fermentation to lactate; (S)-lactate from pyruvate: step 1/1. Allosterically activated by fructose 1,6-bisphosphate (FBP). Its function is as follows. Catalyzes the conversion of lactate to pyruvate. This Staphylococcus epidermidis (strain ATCC 12228 / FDA PCI 1200) protein is L-lactate dehydrogenase.